The primary structure comprises 144 residues: Nucleoside diphosphate kinase (144 aa).

Residues K11, F59, R87, T93, R104, and N114 each coordinate ATP. Catalysis depends on H117, which acts as the Pros-phosphohistidine intermediate.

Belongs to the NDK family. As to quaternary structure, homotetramer. Requires Mg(2+) as cofactor.

The protein resides in the cytoplasm. The catalysed reaction is a 2'-deoxyribonucleoside 5'-diphosphate + ATP = a 2'-deoxyribonucleoside 5'-triphosphate + ADP. It carries out the reaction a ribonucleoside 5'-diphosphate + ATP = a ribonucleoside 5'-triphosphate + ADP. Functionally, major role in the synthesis of nucleoside triphosphates other than ATP. The ATP gamma phosphate is transferred to the NDP beta phosphate via a ping-pong mechanism, using a phosphorylated active-site intermediate. This Coxiella burnetii (strain CbuG_Q212) (Coxiella burnetii (strain Q212)) protein is Nucleoside diphosphate kinase.